The following is a 65-amino-acid chain: Large ribosomal subunit protein bL35 (65 aa).

It belongs to the bacterial ribosomal protein bL35 family.

In Parasynechococcus marenigrum (strain WH8102), this protein is Large ribosomal subunit protein bL35.